We begin with the raw amino-acid sequence, 335 residues long: Selenide, water dikinase (335 aa).

Residue Sec-7 is part of the active site. Position 7 (Sec-7) is a non-standard amino acid, selenocysteine. ATP is bound by residues Lys-10 and 36–38; that span reads LGD. Asp-39 provides a ligand contact to Mg(2+). ATP-binding positions include Asp-55, Asp-78, and 126-128; that span reads GHT. Position 78 (Asp-78) interacts with Mg(2+). Position 232 (Asp-232) interacts with Mg(2+).

It belongs to the selenophosphate synthase 1 family. Class I subfamily. In terms of assembly, homodimer. The cofactor is Mg(2+).

The catalysed reaction is hydrogenselenide + ATP + H2O = selenophosphate + AMP + phosphate + 2 H(+). Synthesizes selenophosphate from selenide and ATP. The chain is Selenide, water dikinase from Methanococcus maripaludis (strain DSM 14266 / JCM 13030 / NBRC 101832 / S2 / LL).